A 414-amino-acid chain; its full sequence is FAD-dependent monooxygenase adaC (414 aa).

Residues Glu32, Ala43, Arg115, Asp325, and Gly338 each coordinate FAD.

It belongs to the paxM FAD-dependent monooxygenase family. FAD is required as a cofactor.

It carries out the reaction 3-(2,4-dioxopentyl)-3,6,8,9-tetrahydroxy-1-oxo-1,2,3,4-tetrahydroanthracene-2-carboxyl-[ACP] + NADPH + O2 + H(+) = 3-(2,4-dioxopentyl)-2,3,6,8,9-pentahydroxy-1-oxo-1,2,3,4-tetrahydroanthracene-2-carboxyl-[ACP] + NADP(+) + H2O. It participates in secondary metabolite biosynthesis. Its function is as follows. FAD-dependent monooxygenase; part of the gene cluster that mediates the biosynthesis of the linear tetracyclic TAN-1612 neuropeptide Y receptor antagonist. The decaketide backbone of TAN-1612 is synthesized by the non-reducing polyketide synthase adaA via condensation of one acetyl-CoA starter unit with 9 malonyl-CoA units. The FAD-dependent monooxygenase adaC then performs hydroxylation at C2 while the polaketide chain is still attached to the NRPKS adaA. The alpha-hydroxylation step at C2 appears to be crucial for the following C18-C1 Claisen cyclization and release of the C9-hydroxyl version of TAN-1612 from the NRPKS adaA, two steps performed by the lactamase-like protein adaB. Finally, the O-methyltransferase adaD performs the C9 O-methylation to complete the biosynthesis of TAN-1612. This is FAD-dependent monooxygenase adaC from Aspergillus niger.